A 521-amino-acid polypeptide reads, in one-letter code: Glucomannan 4-beta-mannosyltransferase 1 (521 aa).

The chain crosses the membrane as a helical span at residues 22–42; it reads VIVPLLRLAVAVCLTMSVLLF. Residue D123 is part of the active site. Substrate-binding residues include D182 and D184. D276 is an active-site residue. The next 4 helical transmembrane spans lie at 355-375, 391-411, 471-491, and 495-515; these read IIAH…TIFV, IITL…FFWI, VTEL…LAFG, and FFIY…GYVG.

The protein belongs to the glycosyltransferase 2 family. Plant cellulose synthase-like A subfamily.

The protein resides in the golgi apparatus membrane. The catalysed reaction is GDP-mannose + (glucomannan)n = GDP + (glucomannan)n+1.. Its function is as follows. Possesses glucomannan synthase and mannan synthase activities in vitro. Mannan synthase consists of a 4-beta-mannosyltransferase activity on mannan using GDP-mannose. The beta-1,4-mannan product is the backbone for galactomannan synthesis by galactomannan galactosyltransferase. Galactomannan is a noncellulosic polysaccharides of plant cell wall. The protein is Glucomannan 4-beta-mannosyltransferase 1 of Oryza sativa subsp. japonica (Rice).